Here is a 267-residue protein sequence, read N- to C-terminus: RWD domain-containing protein 3 (267 aa).

In terms of domain architecture, RWD spans 7–114; sequence EELSVLAAIF…LWIQQNLRHI (108 aa). Interaction with UBE2I/UBC9 regions lie at residues 13–15 and 100–102; these read AAI and VHE.

As to quaternary structure, isoform 1 and isoform 2 interact with UBE2I/UBC9. Isoform 1 shows a greater interaction with NFKBIA and HIF1A as compared to isoform 2. Isoform 2 interacts with NCOA2 and NR3C1. Isoform 1 and isoform 2 are expressed in glioma tumors (at protein level). Expressed in a wide number of tissues with highest expression in cerebellum, pituitary, heart, kidney, liver, stomach, pancreas, prostate and spleen. Low levels in thalamus, spinal cord, esophagus, thymus, lung and peripheral blood leukocytes. A higher level expression seen in pituitary tumors as compared to the pituitary gland.

It localises to the nucleus. The protein localises to the cytoplasm. Its function is as follows. Enhancer of SUMO conjugation. Via its interaction with UBE2I/UBC9, increases SUMO conjugation to proteins by promoting the binding of E1 and E2 enzymes, thioester linkage between SUMO and UBE2I/UBC9 and transfer of SUMO to specific target proteins which include HIF1A, PIAS, NFKBIA, NR3C1 and TOP1. Isoform 1 and isoform 2 positively regulate the NF-kappa-B signaling pathway by enhancing the sumoylation of NF-kappa-B inhibitor alpha (NFKBIA), promoting its stabilization which consequently leads to an increased inhibition of NF-kappa-B transcriptional activity. Isoform 1 and isoform 2 negatively regulate the hypoxia-inducible factor-1 alpha (HIF1A) signaling pathway by increasing the sumoylation of HIF1A, promoting its stabilization, transcriptional activity and the expression of its target gene VEGFA during hypoxia. Isoform 2 promotes the sumoylation and transcriptional activity of the glucocorticoid receptor NR3C1 and enhances the interaction of SUMO1 and NR3C1 with UBE2I/UBC9. Has no effect on ubiquitination. The chain is RWD domain-containing protein 3 (RWDD3) from Homo sapiens (Human).